We begin with the raw amino-acid sequence, 51 residues long: Large ribosomal subunit protein eL39 (51 aa).

Belongs to the eukaryotic ribosomal protein eL39 family.

This Saccharolobus islandicus (strain L.S.2.15 / Lassen #1) (Sulfolobus islandicus) protein is Large ribosomal subunit protein eL39.